The chain runs to 328 residues: Protein MGF 300-4L (328 aa).

It belongs to the asfivirus MGF 300 family.

The sequence is that of Protein MGF 300-4L from Ornithodoros (relapsing fever ticks).